Here is a 255-residue protein sequence, read N- to C-terminus: Ribonuclease HII (255 aa).

The RNase H type-2 domain occupies 73-255 (LYIGGIDEAG…HRKSFLKNIL (183 aa)). Residues Asp-79, Glu-80, and Asp-171 each contribute to the a divalent metal cation site.

The protein belongs to the RNase HII family. The cofactor is Mn(2+). Mg(2+) is required as a cofactor.

The protein resides in the cytoplasm. The catalysed reaction is Endonucleolytic cleavage to 5'-phosphomonoester.. Functionally, endonuclease that specifically degrades the RNA of RNA-DNA hybrids. This Clostridioides difficile (strain 630) (Peptoclostridium difficile) protein is Ribonuclease HII.